The sequence spans 305 residues: MWFGRDVISARDFSREDLYELFEMAKYMEKFAKSRVDFLRGKVMATAFFEPSTRTRLSFEVAMKRLGGDVIGFGSAEGTSVEKGETLADTIRMLDAYADVIVIRHKYEGAAKLAAEVAESPVVNGGDGAYNHPTQAMLDVYTIWREFGHVDGLNVGLMGDLRNARTINSLVETLANFNVRLYFISPEFLRPRAETVDYARDKGVKMSFHTNVEEVVHELDVLYVVRIQKERFLDPLEYERVKGSYRVTLELLKNAKRGLIVLHPLPRVDEIDHRIDSTPHAKYFIQAALGVPLRMALIYLILSPP.

R54 and T55 together coordinate carbamoyl phosphate. L-aspartate is bound at residue K83. Carbamoyl phosphate contacts are provided by R104, H132, and Q135. The L-aspartate site is built by R165 and R226. Carbamoyl phosphate is bound by residues L265 and P266.

Belongs to the aspartate/ornithine carbamoyltransferase superfamily. ATCase family. In terms of assembly, heterooligomer of catalytic and regulatory chains.

It carries out the reaction carbamoyl phosphate + L-aspartate = N-carbamoyl-L-aspartate + phosphate + H(+). It functions in the pathway pyrimidine metabolism; UMP biosynthesis via de novo pathway; (S)-dihydroorotate from bicarbonate: step 2/3. In terms of biological role, catalyzes the condensation of carbamoyl phosphate and aspartate to form carbamoyl aspartate and inorganic phosphate, the committed step in the de novo pyrimidine nucleotide biosynthesis pathway. The chain is Aspartate carbamoyltransferase catalytic subunit from Pyrobaculum calidifontis (strain DSM 21063 / JCM 11548 / VA1).